Here is a 578-residue protein sequence, read N- to C-terminus: Isocitrate dehydrogenase kinase/phosphatase (578 aa).

ATP contacts are provided by residues 315-321 (APGIRGM) and K336. D371 is an active-site residue.

Belongs to the AceK family.

It is found in the cytoplasm. The catalysed reaction is L-seryl-[isocitrate dehydrogenase] + ATP = O-phospho-L-seryl-[isocitrate dehydrogenase] + ADP + H(+). Functionally, bifunctional enzyme which can phosphorylate or dephosphorylate isocitrate dehydrogenase (IDH) on a specific serine residue. This is a regulatory mechanism which enables bacteria to bypass the Krebs cycle via the glyoxylate shunt in response to the source of carbon. When bacteria are grown on glucose, IDH is fully active and unphosphorylated, but when grown on acetate or ethanol, the activity of IDH declines drastically concomitant with its phosphorylation. The protein is Isocitrate dehydrogenase kinase/phosphatase of Escherichia coli O139:H28 (strain E24377A / ETEC).